The chain runs to 1266 residues: Formin-like protein 13 (1266 aa).

In terms of domain architecture, Phosphatase tensin-type spans 9–193 (YRKPPDGLLE…QYVSRRNLVS (185 aa)). Cys-126 functions as the Phosphocysteine intermediate in the catalytic mechanism. Residues 199–337 (DRALTMDCVI…FRVELLFSDM (139 aa)) enclose the C2 tensin-type domain. Disordered regions lie at residues 497 to 568 (KPLV…LQHS), 597 to 825 (KNLI…GKGR), 881 to 902 (SASA…PKPE), and 1210 to 1266 (QLEA…RTAP). The segment covering 529–538 (PPTPSPPHPV) has biased composition (pro residues). Residues 617–644 (EPSSKTTNSLLLSPQASPATPTNPSKTV) are compositionally biased toward polar residues. 4 stretches are compositionally biased toward pro residues: residues 686 to 698 (LPRP…PPPM), 706 to 742 (VPPP…PPTP), 754 to 781 (PPAP…PPPL), and 806 to 815 (PNVPPTPALP). Positions 829–1226 (VNLKNSPAKK…KNAAEKEKPK (398 aa)) constitute an FH2 domain. 3 stretches are compositionally biased toward basic and acidic residues: residues 889 to 902 (GKSR…PKPE), 1210 to 1248 (QLEA…EKTK), and 1255 to 1266 (EMSDRLKERTAP).

The protein belongs to the formin-like family. Class-II subfamily.

The protein is Formin-like protein 13 (FH13) of Arabidopsis thaliana (Mouse-ear cress).